A 258-amino-acid chain; its full sequence is Acyl-[acyl-carrier-protein]--UDP-N-acetylglucosamine O-acyltransferase (258 aa).

The protein belongs to the transferase hexapeptide repeat family. LpxA subfamily. In terms of assembly, homotrimer.

Its subcellular location is the cytoplasm. The enzyme catalyses a (3R)-hydroxyacyl-[ACP] + UDP-N-acetyl-alpha-D-glucosamine = a UDP-3-O-[(3R)-3-hydroxyacyl]-N-acetyl-alpha-D-glucosamine + holo-[ACP]. Its pathway is glycolipid biosynthesis; lipid IV(A) biosynthesis; lipid IV(A) from (3R)-3-hydroxytetradecanoyl-[acyl-carrier-protein] and UDP-N-acetyl-alpha-D-glucosamine: step 1/6. In terms of biological role, involved in the biosynthesis of lipid A, a phosphorylated glycolipid that anchors the lipopolysaccharide to the outer membrane of the cell. This Azotobacter vinelandii (strain DJ / ATCC BAA-1303) protein is Acyl-[acyl-carrier-protein]--UDP-N-acetylglucosamine O-acyltransferase.